The chain runs to 262 residues: Global transcriptional regulator CodY (262 aa).

The tract at residues 1–159 (MAHLLEKTRK…ASTVVGIQLL (159 aa)) is GAF domain. The H-T-H motif DNA-binding region spans 207-226 (ASVIADRIGITRSVIVNALR).

Belongs to the CodY family.

The protein resides in the cytoplasm. Its function is as follows. DNA-binding global transcriptional regulator which is involved in the adaptive response to starvation and acts by directly or indirectly controlling the expression of numerous genes in response to nutrient availability. During rapid exponential growth, CodY is highly active and represses genes whose products allow adaptation to nutrient depletion. The sequence is that of Global transcriptional regulator CodY from Streptococcus pneumoniae (strain ATCC BAA-255 / R6).